A 1728-amino-acid chain; its full sequence is Mitochondrial 3' processome subunit 1 (1728 aa).

The N-terminal 117 residues, 1–117 (MRRLILSQTL…AGKMTGSSRF (117 aa)), are a transit peptide targeting the mitochondrion. Disordered stretches follow at residues 45–71 (HRKREGRMYGKPLRPVSDGENGASGDG), 88–156 (ESPV…IGQQ), and 829–863 (GCNRDGGPSRPNTATDSANKKVVSGKQTDNLPKGT).

As to quaternary structure, component of the mitochondrial 3' processome (MPsome) complex composed at least of terminal uridylyltransferase KRET1/TUT1, 3'-5' exonuclease DSS1, MPSS1, MPSS2 and MPSS3. Within the complex, interacts with KRET1.

It is found in the mitochondrion. Its function is as follows. As part of the mitochondrial 3' processome (MPsome), involved in the maturation of guided RNA (gRNA) precursors. The chain is Mitochondrial 3' processome subunit 1 from Trypanosoma brucei brucei.